The primary structure comprises 63 residues: Large ribosomal subunit protein bL28c (63 aa).

This sequence belongs to the bacterial ribosomal protein bL28 family.

Its subcellular location is the plastid. The protein localises to the chloroplast. The sequence is that of Large ribosomal subunit protein bL28c (rpl28) from Porphyra purpurea (Red seaweed).